Consider the following 433-residue polypeptide: Xylose isomerase (433 aa).

Active-site residues include His99 and Asp102. Positions 230, 266, 269, 294, 305, 307, and 337 each coordinate Mg(2+).

It belongs to the xylose isomerase family. As to quaternary structure, homotetramer. Mg(2+) is required as a cofactor.

The protein resides in the cytoplasm. The enzyme catalyses alpha-D-xylose = alpha-D-xylulofuranose. This is Xylose isomerase from Cereibacter sphaeroides (strain ATCC 17029 / ATH 2.4.9) (Rhodobacter sphaeroides).